Here is a 654-residue protein sequence, read N- to C-terminus: Tumor necrosis factor alpha-induced protein 2 (654 aa).

2 disordered regions span residues 1–38 (MSEASSEDLVPPLEAGAAPYREEEEAAKKKKEKKKKSK) and 50–78 (GKKKKGQPSSAEPEDAAGSRQGLDGPPPT). Over residues 28–38 (KKKKEKKKKSK) the composition is skewed to basic residues.

Belongs to the SEC6 family.

In terms of biological role, may play a role as a mediator of inflammation and angiogenesis. This is Tumor necrosis factor alpha-induced protein 2 (TNFAIP2) from Homo sapiens (Human).